Here is a 181-residue protein sequence, read N- to C-terminus: Endoribonuclease YbeY (181 aa).

The Zn(2+) site is built by histidine 140, histidine 144, and histidine 150.

The protein belongs to the endoribonuclease YbeY family. It depends on Zn(2+) as a cofactor.

The protein resides in the cytoplasm. In terms of biological role, single strand-specific metallo-endoribonuclease involved in late-stage 70S ribosome quality control and in maturation of the 3' terminus of the 16S rRNA. The polypeptide is Endoribonuclease YbeY (Dinoroseobacter shibae (strain DSM 16493 / NCIMB 14021 / DFL 12)).